Consider the following 419-residue polypeptide: Serine hydroxymethyltransferase (419 aa).

(6S)-5,6,7,8-tetrahydrofolate is bound by residues Leu118 and 122–124 (GHL). N6-(pyridoxal phosphate)lysine is present on Lys226. Residue Glu242 coordinates (6S)-5,6,7,8-tetrahydrofolate.

Belongs to the SHMT family. As to quaternary structure, homodimer. Pyridoxal 5'-phosphate is required as a cofactor.

The protein resides in the cytoplasm. The catalysed reaction is (6R)-5,10-methylene-5,6,7,8-tetrahydrofolate + glycine + H2O = (6S)-5,6,7,8-tetrahydrofolate + L-serine. Its pathway is one-carbon metabolism; tetrahydrofolate interconversion. The protein operates within amino-acid biosynthesis; glycine biosynthesis; glycine from L-serine: step 1/1. Functionally, catalyzes the reversible interconversion of serine and glycine with tetrahydrofolate (THF) serving as the one-carbon carrier. This reaction serves as the major source of one-carbon groups required for the biosynthesis of purines, thymidylate, methionine, and other important biomolecules. Also exhibits THF-independent aldolase activity toward beta-hydroxyamino acids, producing glycine and aldehydes, via a retro-aldol mechanism. The protein is Serine hydroxymethyltransferase of Metamycoplasma arthritidis (strain 158L3-1) (Mycoplasma arthritidis).